A 433-amino-acid polypeptide reads, in one-letter code: MSQIVDIKAREVLDSRGNPTVEADVILADGSVGSACAPSGASTGSREALELRDGDKSRYLGKGVLKAVAAVNGPIRDALIGKDALAQAEIDHIMIDLDGTENKSTFGANAILAVSLAVAKAAAISKKVPLYAHIADINGTPGVYSMPVPMMNIINGGEHADNNVDIQEFMIQPVGAPNFREALRYGAEIFHALKKVLSDRGLSTAVGDEGGFAPDLSSNAEALAVIKEAVAAAGYELGKDITLAMDCAASEFYDKEANIYDLKGEGKKFTSEEFNFFLQDLTKQYPIVSIEDGLDESDWDGFAHQTKLMGDKIQLVGDDLFVTNTKILQRGIDNGIANSILIKFNQIGSLTETLAAIKMAKDAGFTAVISHRSGETEDATIADLAVGTAAGQIKTGSLCRSDRVAKYNQLLRIEEQLGGKAPYKGRSEIKGQA.

Q167 provides a ligand contact to (2R)-2-phosphoglycerate. The active-site Proton donor is the E209. Mg(2+) is bound by residues D246, E291, and D318. 4 residues coordinate (2R)-2-phosphoglycerate: K343, R372, S373, and K394. K343 serves as the catalytic Proton acceptor.

It belongs to the enolase family. Component of the RNA degradosome, a multiprotein complex involved in RNA processing and mRNA degradation. Requires Mg(2+) as cofactor.

The protein localises to the cytoplasm. It localises to the secreted. The protein resides in the cell surface. It carries out the reaction (2R)-2-phosphoglycerate = phosphoenolpyruvate + H2O. Its pathway is carbohydrate degradation; glycolysis; pyruvate from D-glyceraldehyde 3-phosphate: step 4/5. Its function is as follows. Catalyzes the reversible conversion of 2-phosphoglycerate (2-PG) into phosphoenolpyruvate (PEP). It is essential for the degradation of carbohydrates via glycolysis. In Marinomonas sp. (strain MWYL1), this protein is Enolase.